The primary structure comprises 250 residues: DNA repair protein RecO (250 aa).

It belongs to the RecO family.

In terms of biological role, involved in DNA repair and RecF pathway recombination. The sequence is that of DNA repair protein RecO from Staphylococcus aureus (strain MRSA252).